The following is a 370-amino-acid chain: 3-dehydroquinate synthase (370 aa).

NAD(+) contacts are provided by residues 107–111, 131–132, K144, and K153; these read GVIGD and TS. Residues E186, H249, and H267 each coordinate Zn(2+).

The protein belongs to the sugar phosphate cyclases superfamily. Dehydroquinate synthase family. The cofactor is Co(2+). It depends on Zn(2+) as a cofactor. NAD(+) is required as a cofactor.

It is found in the cytoplasm. The catalysed reaction is 7-phospho-2-dehydro-3-deoxy-D-arabino-heptonate = 3-dehydroquinate + phosphate. The protein operates within metabolic intermediate biosynthesis; chorismate biosynthesis; chorismate from D-erythrose 4-phosphate and phosphoenolpyruvate: step 2/7. Its function is as follows. Catalyzes the conversion of 3-deoxy-D-arabino-heptulosonate 7-phosphate (DAHP) to dehydroquinate (DHQ). This chain is 3-dehydroquinate synthase, found in Ruegeria pomeroyi (strain ATCC 700808 / DSM 15171 / DSS-3) (Silicibacter pomeroyi).